Here is a 376-residue protein sequence, read N- to C-terminus: Glutamate 5-kinase (376 aa).

Lys18 provides a ligand contact to ATP. Substrate-binding residues include Ser58, Asp145, and Asn157. ATP contacts are provided by residues Ser177 to Asp178 and Thr218 to Lys224. One can recognise a PUA domain in the interval Thr280–Pro358.

The protein belongs to the glutamate 5-kinase family.

It is found in the cytoplasm. It carries out the reaction L-glutamate + ATP = L-glutamyl 5-phosphate + ADP. The protein operates within amino-acid biosynthesis; L-proline biosynthesis; L-glutamate 5-semialdehyde from L-glutamate: step 1/2. Its function is as follows. Catalyzes the transfer of a phosphate group to glutamate to form L-glutamate 5-phosphate. The sequence is that of Glutamate 5-kinase from Mycobacterium tuberculosis (strain CDC 1551 / Oshkosh).